The primary structure comprises 340 residues: Probable D,D-dipeptide transport system permease protein DdpB (340 aa).

Residues 1–11 (MTFWSILRQRC) lie on the Periplasmic side of the membrane. The chain crosses the membrane as a helical span at residues 12-32 (WGLVLVVAGVCVITFIISHLI). Over 33–104 (PGDPARLLAG…IFFPATLELA (72 aa)) the chain is Cytoplasmic. The ABC transmembrane type-1 domain occupies 97–327 (FPATLELAFG…LVNLVVDLLY (231 aa)). A helical membrane pass occupies residues 105–125 (FGALLLALLIGIPLGILSAVW). Residues 126 to 135 (RNRWLDHLVR) are Periplasmic-facing. A helical membrane pass occupies residues 136–156 (IMAITGISTPAFWLGLGVIVL). The Cytoplasmic portion of the chain corresponds to 157-199 (FYGHLQILPGGGRLDDWLDPPTHVTGFYLLDALLEGNGEVFFN). The helical transmembrane segment at 200–220 (ALQHLILPALTLAFVHLGIVA) threads the bilayer. The Periplasmic segment spans residues 221–246 (RQIRSAMLEQLSEDYIRTARASGLPG). A helical membrane pass occupies residues 247–269 (WYIVLCYALPNALIPSITVLGLA). At 270–279 (LGDLLYGAVL) the chain is on the cytoplasmic side. Residues 280 to 300 (TETVFAWPGMGAWVVTSIQAL) form a helical membrane-spanning segment. Position 301 (D301) is a topological domain, periplasmic. Residues 302 to 322 (FPAVMGFAVVVSFAYVLVNLV) form a helical membrane-spanning segment. Over 323–340 (VDLLYLWIDPRIGRGGGE) the chain is Cytoplasmic.

This sequence belongs to the binding-protein-dependent transport system permease family. OppBC subfamily. As to quaternary structure, the complex is composed of two ATP-binding proteins (DdpD and DdpF), two transmembrane proteins (DdpB and DdpC) and a solute-binding protein (DdpA).

It is found in the cell inner membrane. Part of the ABC transporter complex DdpABCDF, which is probably involved in D,D-dipeptide transport. Probably responsible for the translocation of the substrate across the membrane. The polypeptide is Probable D,D-dipeptide transport system permease protein DdpB (ddpB) (Escherichia coli (strain K12)).